Here is a 187-residue protein sequence, read N- to C-terminus: Calmodulin-like protein 1 (187 aa).

Ala2 is modified (N-acetylalanine). 4 consecutive EF-hand domains span residues 8–43, 44–79, 81–116, and 117–152; these read EQIGEFREAFSLFDKDGDGSITTKELGTVMRSLGQN, PTEAELQDMISEVDTDSNGNIEFKEFLGLMARKLRD, DSEEELKEAFRVFDKDQNGFISATELRHVMANIGER, and LTDEEVGEMISEADVDGDGQINYEEFVKCMMAKKRR. 19 residues coordinate Ca(2+): Asp21, Asp23, Asp25, Ser27, Glu32, Asp57, Asp59, Asn61, Asn63, Glu68, Asp94, Asp96, Asn98, Glu105, Asp130, Asp132, Asp134, Gln136, and Glu141. Residues 153-187 form a disordered region; the sequence is KRIEEKRDHDGGSRTKSAGPSAAPASKRGQKCVIL. Positions 154 to 165 are enriched in basic and acidic residues; it reads RIEEKRDHDGGS. Residues 169 to 178 show a composition bias toward low complexity; sequence SAGPSAAPAS. The residue at position 184 (Cys184) is a Cysteine methyl ester. Cys184 carries the S-farnesyl cysteine lipid modification. The propeptide at 185–187 is removed in mature form; that stretch reads VIL.

This sequence belongs to the calmodulin family.

The protein localises to the membrane. Functionally, calcium-binding protein that binds and activates CAMK1, a calcium/calmodulin-dependent kinase. In Oryza sativa subsp. japonica (Rice), this protein is Calmodulin-like protein 1 (CML1).